A 263-amino-acid polypeptide reads, in one-letter code: Triosephosphate isomerase (263 aa).

A substrate-binding site is contributed by 10–12 (NWK). Residue H104 is the Electrophile of the active site. Residue E176 is the Proton acceptor of the active site. Substrate is bound by residues G182, S221, and 242-243 (GG).

This sequence belongs to the triosephosphate isomerase family. Homodimer.

Its subcellular location is the cytoplasm. It carries out the reaction D-glyceraldehyde 3-phosphate = dihydroxyacetone phosphate. Its pathway is carbohydrate biosynthesis; gluconeogenesis. It participates in carbohydrate degradation; glycolysis; D-glyceraldehyde 3-phosphate from glycerone phosphate: step 1/1. Its function is as follows. Involved in the gluconeogenesis. Catalyzes stereospecifically the conversion of dihydroxyacetone phosphate (DHAP) to D-glyceraldehyde-3-phosphate (G3P). The sequence is that of Triosephosphate isomerase from Haemophilus influenzae (strain ATCC 51907 / DSM 11121 / KW20 / Rd).